Reading from the N-terminus, the 48-residue chain is Sperm protamine P1 (48 aa).

The protein belongs to the protamine P1 family. Testis.

It is found in the nucleus. The protein localises to the chromosome. Its function is as follows. Protamines substitute for histones in the chromatin of sperm during the haploid phase of spermatogenesis. They compact sperm DNA into a highly condensed, stable and inactive complex. The chain is Sperm protamine P1 (PRM1) from Corynorhinus townsendii (Townsend's big-eared bat).